Here is a 308-residue protein sequence, read N- to C-terminus: Transaldolase (308 aa).

Lys125 serves as the catalytic Schiff-base intermediate with substrate.

The protein belongs to the transaldolase family. Type 1 subfamily. As to quaternary structure, homodimer.

The protein localises to the cytoplasm. The catalysed reaction is D-sedoheptulose 7-phosphate + D-glyceraldehyde 3-phosphate = D-erythrose 4-phosphate + beta-D-fructose 6-phosphate. The protein operates within carbohydrate degradation; pentose phosphate pathway; D-glyceraldehyde 3-phosphate and beta-D-fructose 6-phosphate from D-ribose 5-phosphate and D-xylulose 5-phosphate (non-oxidative stage): step 2/3. Its function is as follows. Transaldolase is important for the balance of metabolites in the pentose-phosphate pathway. The protein is Transaldolase of Pseudomonas fluorescens (strain Pf0-1).